A 132-amino-acid chain; its full sequence is Keratin, high-sulfur matrix protein, IIIA3 (132 aa).

Functionally, the keratin products of mammalian epidermal derivatives such as wool and hair consist of microfibrils embedded in a rigid matrix of other proteins. The matrix proteins include the high-sulfur and high-tyrosine keratins, having molecular weights of 6-20 kDa, whereas the microfibrils contain the larger, low-sulfur keratins (40-56 kDa). This is Keratin, high-sulfur matrix protein, IIIA3 from Capra hircus (Goat).